Consider the following 293-residue polypeptide: Protein bcp-1 (293 aa).

The span at 1 to 12 (MGKKRSREEAQK) shows a compositional bias: basic and acidic residues. The segment at 1-35 (MGKKRSREEAQKEVVQNDPTVDKMDEDSDSSDSDE) is disordered. Acidic residues predominate over residues 24 to 35 (MDEDSDSSDSDE).

This sequence belongs to the BCP1 family.

It localises to the cytoplasm. The protein resides in the nucleus. Its function is as follows. Involved in nuclear export, actin cytoskeleton organization and vesicular transport. This chain is Protein bcp-1 (bcp-1), found in Neurospora crassa (strain ATCC 24698 / 74-OR23-1A / CBS 708.71 / DSM 1257 / FGSC 987).